The sequence spans 234 residues: Small ribosomal subunit protein eS4 (234 aa).

The region spanning 38–99 (IPLLIALRDY…GNDYLVSYDR (62 aa)) is the S4 RNA-binding; degenerate domain.

This sequence belongs to the eukaryotic ribosomal protein eS4 family.

In Picrophilus torridus (strain ATCC 700027 / DSM 9790 / JCM 10055 / NBRC 100828 / KAW 2/3), this protein is Small ribosomal subunit protein eS4 (rps4e).